Reading from the N-terminus, the 179-residue chain is Large ribosomal subunit protein uL6 (179 aa).

The protein belongs to the universal ribosomal protein uL6 family. As to quaternary structure, part of the 50S ribosomal subunit.

Its function is as follows. This protein binds to the 23S rRNA, and is important in its secondary structure. It is located near the subunit interface in the base of the L7/L12 stalk, and near the tRNA binding site of the peptidyltransferase center. In Mycobacterium leprae (strain Br4923), this protein is Large ribosomal subunit protein uL6.